Reading from the N-terminus, the 432-residue chain is Crenactin (432 aa).

Residues Thr-20 to Lys-24, Gly-182 to His-184, Glu-235 to Arg-239, Gly-354 to Trp-358, and Gln-399 each bind ATP.

Belongs to the actin family. As to quaternary structure, monomer. The crenactin monomers polymerize into right-handed helical filaments, with 8 subunits per complete turn of the helix. Forms single-stranded filaments under high salt concentrations and double-stranded filaments under low salt concentrations. Interacts with arcadin-1 and arcadin-2.

It is found in the cytoplasm. Its subcellular location is the cytoskeleton. The catalysed reaction is ATP + H2O = ADP + phosphate + H(+). Its activity is regulated as follows. Crenactin polymerization is inhibited by interaction with arcadin-2. Also significantly inhibited by elevated antibiotic A22 concentrations. Its function is as follows. Forms the backbone of an actin-like archaeal cytoskeleton, which is involved in cell shape determination. Has ATPase activity. Shows highest activity towards ATP or GTP as nucleotide, and only residual activity on UTP, CTP and dNTPs. The protein is Crenactin of Pyrobaculum calidifontis (strain DSM 21063 / JCM 11548 / VA1).